An 88-amino-acid chain; its full sequence is Putative carnobacteriocin-BM1 immunity protein (88 aa).

In terms of biological role, could impart immunity to carnobacteriocin-BM1 to naturally sensitive host strains. The polypeptide is Putative carnobacteriocin-BM1 immunity protein (Carnobacterium maltaromaticum (Carnobacterium piscicola)).